The primary structure comprises 452 residues: Chromosomal replication initiator protein DnaA (452 aa).

A domain I, interacts with DnaA modulators region spans residues 1 to 72; that stretch reads MPDMLTLWTD…LVEYAYQAAH (72 aa). A domain II region spans residues 72–114; the sequence is HEDIQPVLILENERQQQATLKAKTAPVAAGEPVEPTPTFMKET. A domain III, AAA+ region region spans residues 115–331; sequence ALNSRYTFDT…GALARVQAYS (217 aa). 4 residues coordinate ATP: Gly159, Gly161, Lys162, and Thr163. The tract at residues 332–452 is domain IV, binds dsDNA; the sequence is QLMHQPIATD…IDSLKDDLRR (121 aa).

Belongs to the DnaA family. In terms of assembly, oligomerizes as a right-handed, spiral filament on DNA at oriC.

The protein localises to the cytoplasm. In terms of biological role, plays an essential role in the initiation and regulation of chromosomal replication. ATP-DnaA binds to the origin of replication (oriC) to initiate formation of the DNA replication initiation complex once per cell cycle. Binds the DnaA box (a 9 base pair repeat at the origin) and separates the double-stranded (ds)DNA. Forms a right-handed helical filament on oriC DNA; dsDNA binds to the exterior of the filament while single-stranded (ss)DNA is stabiized in the filament's interior. The ATP-DnaA-oriC complex binds and stabilizes one strand of the AT-rich DNA unwinding element (DUE), permitting loading of DNA polymerase. After initiation quickly degrades to an ADP-DnaA complex that is not apt for DNA replication. Binds acidic phospholipids. This Levilactobacillus brevis (strain ATCC 367 / BCRC 12310 / CIP 105137 / JCM 1170 / LMG 11437 / NCIMB 947 / NCTC 947) (Lactobacillus brevis) protein is Chromosomal replication initiator protein DnaA.